A 551-amino-acid chain; its full sequence is DEAD-box ATP-dependent RNA helicase 47, mitochondrial (551 aa).

The N-terminal 29 residues, 1–29, are a transit peptide targeting the mitochondrion; it reads MAASTSTRFLVLLKDFSAFRKISWTCAAT. Positions 110 to 138 match the Q motif motif; that stretch reads KSFEELGLPDSLLDSLEREGFSVPTDVQS. The 200-residue stretch at 141–340 folds into the Helicase ATP-binding domain; it reads VPAIIKGHDA…KSWSHEPVLV (200 aa). An ATP-binding site is contributed by 154-161; that stretch reads SYTGSGKT. The short motif at 274 to 277 is the DEAD box element; that stretch reads DEVD. Residues 397–548 enclose the Helicase C-terminal domain; the sequence is TLRRCVHALD…ELVVTEEDKA (152 aa).

Belongs to the DEAD box helicase family. In terms of tissue distribution, mostly expressed in leaves and flowers, and, to a lower extent, in roots, seedlings and siliques, especially in meristematic regions.

The protein localises to the mitochondrion. The enzyme catalyses ATP + H2O = ADP + phosphate + H(+). Essential protein required during embryogenesis. Required for mitochondrial metabolism. Necessary for normal plasmodesmata (PD) development and aperture regulation. The protein is DEAD-box ATP-dependent RNA helicase 47, mitochondrial (RH47) of Arabidopsis thaliana (Mouse-ear cress).